The sequence spans 169 residues: Photosystem I assembly protein Ycf3 (169 aa).

TPR repeat units follow at residues 35 to 68 (AFTY…EIDP), 72 to 105 (SYIL…NPSL), and 120 to 153 (GEQA…APNN).

Belongs to the Ycf3 family.

It is found in the plastid. The protein resides in the chloroplast thylakoid membrane. Its function is as follows. Essential for the assembly of the photosystem I (PSI) complex. May act as a chaperone-like factor to guide the assembly of the PSI subunits. This Staurastrum punctulatum (Green alga) protein is Photosystem I assembly protein Ycf3.